A 366-amino-acid chain; its full sequence is uncharacterized protein (366 aa).

Positions 59–222 (LNILHGIGET…LYDTPGIINN (164 aa)) constitute a CP-type G domain.

This sequence belongs to the TRAFAC class YlqF/YawG GTPase family.

In terms of biological role, binds GTP and GDP. This is an uncharacterized protein from Bacillus subtilis (strain 168).